Here is a 300-residue protein sequence, read N- to C-terminus: ADP,ATP carrier protein 2 (300 aa).

3 Solcar repeats span residues 8 to 100 (VAFI…YKQV), 113 to 203 (RYFI…ARGM), and 214 to 299 (VSWA…IKKV). The next 5 helical transmembrane spans lie at 10–39 (FIKD…LLLQ), 77–101 (LANV…KQVF), 112–132 (TRYF…SLCF), 181–201 (VSVQ…DTAR), and 213–233 (YVSW…SYPF). R82 and K94 together coordinate ADP. R237 lines the ADP pocket. An important for transport activity region spans residues 237-242 (RRRMMM). The Nucleotide carrier signature motif motif lies at 237–242 (RRRMMM). Residues 276–293 (AFSNVLRGTGGAFVLVLY) form a helical membrane-spanning segment.

Belongs to the mitochondrial carrier (TC 2.A.29) family. Monomer.

It is found in the mitochondrion inner membrane. The enzyme catalyses ADP(in) + ATP(out) = ADP(out) + ATP(in). Its activity is regulated as follows. The matrix-open state (m-state) is inhibited by the membrane-permeable bongkrekic acid (BKA). The cytoplasmic-open state (c-state) is inhibited by the membrane-impermeable toxic inhibitor carboxyatractyloside (CATR). ADP:ATP antiporter that mediates import of ADP into the mitochondrial matrix for ATP synthesis, and export of ATP out to fuel the cell. Cycles between the cytoplasmic-open state (c-state) and the matrix-open state (m-state): operates by the alternating access mechanism with a single substrate-binding site intermittently exposed to either the cytosolic (c-state) or matrix (m-state) side of the inner mitochondrial membrane. This Anopheles gambiae (African malaria mosquito) protein is ADP,ATP carrier protein 2.